An 890-amino-acid chain; its full sequence is Translation initiation factor IF-2 (890 aa).

The segment at 45-304 is disordered; the sequence is LIDHLNQKNS…LQQGFQKPAQ (260 aa). Positions 67 to 81 are enriched in polar residues; that stretch reads STLNIPGTGGKSKSV. Positions 92-217 are enriched in basic and acidic residues; it reads VKRDPQEAER…RMAEENKWTD (126 aa). Residues 252-266 are compositionally biased toward basic residues; it reads GRGRNAKAARPKKGN. Basic and acidic residues predominate over residues 267-280; it reads KHSESKADREEARA. A tr-type G domain is found at 389 to 558; that stretch reads PRAPVVTIMG…LLQAEVLELK (170 aa). Residues 398–405 are G1; the sequence is GHVDHGKT. 398-405 serves as a coordination point for GTP; the sequence is GHVDHGKT. Positions 423 to 427 are G2; the sequence is GITQH. Residues 444-447 form a G3 region; sequence DTPG. GTP contacts are provided by residues 444–448 and 498–501; these read DTPGH and NKID. The tract at residues 498–501 is G4; it reads NKID. Residues 534 to 536 form a G5 region; sequence SAK. At Lys808 the chain carries N6-acetyllysine.

Belongs to the TRAFAC class translation factor GTPase superfamily. Classic translation factor GTPase family. IF-2 subfamily.

The protein resides in the cytoplasm. One of the essential components for the initiation of protein synthesis. Protects formylmethionyl-tRNA from spontaneous hydrolysis and promotes its binding to the 30S ribosomal subunits. Also involved in the hydrolysis of GTP during the formation of the 70S ribosomal complex. The chain is Translation initiation factor IF-2 from Escherichia fergusonii (strain ATCC 35469 / DSM 13698 / CCUG 18766 / IAM 14443 / JCM 21226 / LMG 7866 / NBRC 102419 / NCTC 12128 / CDC 0568-73).